The following is a 490-amino-acid chain: ATP synthase subunit beta, chloroplastic (490 aa).

170–177 lines the ATP pocket; that stretch reads GGXGVGKT.

Belongs to the ATPase alpha/beta chains family. In terms of assembly, F-type ATPases have 2 components, CF(1) - the catalytic core - and CF(0) - the membrane proton channel. CF(1) has five subunits: alpha(3), beta(3), gamma(1), delta(1), epsilon(1). CF(0) has four main subunits: a(1), b(1), b'(1) and c(9-12).

The protein localises to the plastid. The protein resides in the chloroplast thylakoid membrane. The enzyme catalyses ATP + H2O + 4 H(+)(in) = ADP + phosphate + 5 H(+)(out). Functionally, produces ATP from ADP in the presence of a proton gradient across the membrane. The catalytic sites are hosted primarily by the beta subunits. This Ipomoea coccinea (Scarlet morning-glory) protein is ATP synthase subunit beta, chloroplastic.